Reading from the N-terminus, the 144-residue chain is Large ribosomal subunit protein uL13 (144 aa).

The protein belongs to the universal ribosomal protein uL13 family. Part of the 50S ribosomal subunit.

This protein is one of the early assembly proteins of the 50S ribosomal subunit, although it is not seen to bind rRNA by itself. It is important during the early stages of 50S assembly. The sequence is that of Large ribosomal subunit protein uL13 from Herpetosiphon aurantiacus (strain ATCC 23779 / DSM 785 / 114-95).